A 246-amino-acid chain; its full sequence is MEPNTVIPKYNVRGFEIWGFRDMAQVLDHLLGSGPVKTGTLVAMNAEKLLKAEDDTALCELIKNAEYLYADGISMVRAIRRKYPQAELSRVAGADLWEALMQRAGQQGTPVFLVGGKPDVLAETEAKLRAQWNVNLVGSQDGYFTPEQREALFARIAASGAAIVTVAMGSPKQEIFMRDCRKFYPDALYMGVGGTYDVFTGHVKRAPKIWQNMGLEWLYRLLAQPSRIRRQLKLLKFVGYYYSGRL.

The protein belongs to the glycosyltransferase 26 family.

It catalyses the reaction UDP-N-acetyl-alpha-D-mannosaminouronate + N-acetyl-alpha-D-glucosaminyl-di-trans,octa-cis-undecaprenyl diphosphate = beta-D-ManNAcA-(1-&gt;4)-alpha-D-GlcNAc-di-trans,octa-cis-undecaprenyl diphosphate + UDP + H(+). It functions in the pathway bacterial outer membrane biogenesis; enterobacterial common antigen biosynthesis. Functionally, catalyzes the synthesis of Und-PP-GlcNAc-ManNAcA (Lipid II), the second lipid-linked intermediate involved in enterobacterial common antigen (ECA) synthesis. The chain is UDP-N-acetyl-D-mannosaminuronic acid transferase from Yersinia pseudotuberculosis serotype IB (strain PB1/+).